The primary structure comprises 369 residues: MAEATTCNMENFVAKLANGMSLRTPIEDVNSAPPEGGVKTNAEDMTSKDYYFDSYAHFGIHEEMLKDEVRTLTYRNSMFHNRHLFKDKVVLDVGSGTGILCMFAAKAGAKKVIGIECSSISDYAIKIVKANKLDHVVTIIKGKVEEVELPVEKVDIIISEWMGYCLFYESMLNTVIYARDKWLTPDGLIFPDRATLYITAIEDRQYKDYKIHWWENVYGFDMSCIKDVAIKEPLVDVVDPKQLVSNACLIKEVDIYTVKVDDLSFTSPFCLQVKRNDYIHALVAYFNIEFTRCHKRTGFSTSPESPYTHWKQTVFYMEDYLTVKTGEEIFGTIGMKPNAKNNRDLDFTFDIDFKGQLCELSCSTDYRMR.

The SAM-dependent MTase PRMT-type domain maps to 48–369 (KDYYFDSYAH…LSCSTDYRMR (322 aa)). Residues His-61, Arg-70, Gly-94, Glu-116, and Glu-145 each contribute to the S-adenosyl-L-methionine site. Catalysis depends on residues Glu-160 and Glu-169.

It belongs to the class I-like SAM-binding methyltransferase superfamily. Protein arginine N-methyltransferase family. In terms of assembly, homodimer. Homooctamer; individual homodimers associates to form a homooctamer and homooligomerization is required for proper localization to the cell membrane. Individual homodimers can associate to form a homohexamer. Component of a complex with lsm14a/rap55a. Interacts with cirbp.

The protein resides in the nucleus. It is found in the nucleoplasm. The protein localises to the cytoplasm. Its subcellular location is the cytosol. The enzyme catalyses L-arginyl-[protein] + 2 S-adenosyl-L-methionine = N(omega),N(omega)-dimethyl-L-arginyl-[protein] + 2 S-adenosyl-L-homocysteine + 2 H(+). It carries out the reaction L-arginyl-[protein] + S-adenosyl-L-methionine = N(omega)-methyl-L-arginyl-[protein] + S-adenosyl-L-homocysteine + H(+). The catalysed reaction is N(omega)-methyl-L-arginyl-[protein] + S-adenosyl-L-methionine = N(omega),N(omega)-dimethyl-L-arginyl-[protein] + S-adenosyl-L-homocysteine + H(+). In terms of biological role, arginine methyltransferase that methylates (mono and asymmetric dimethylation) the guanidino nitrogens of arginyl residues present in target proteins. Constitutes the main enzyme that mediates monomethylation and asymmetric dimethylation of histone H4 'Arg-4' (H4R3me1 and H4R3me2a, respectively), a specific tag for epigenetic transcriptional activation. Methylates cirbp to regulate its subcellular location. Acts transiently during metamorphosis as a transcription coactivator, enhancing thyroid hormone (T3) receptor (TR)-mediated transcription by enhancing TR binding to the T3 response element (TRE), and histone modification through recruitment of other coactivators. This chain is Protein arginine N-methyltransferase 1-A (prmt1-a), found in Xenopus laevis (African clawed frog).